Reading from the N-terminus, the 403-residue chain is MTQASAAPLEKTALESYVALAKPSLIGLSRPELMERLGGIGVAAAQRKMRAQQLWHWIYVRGATDFAQMTSISKELRAQLAEHFTVDRPEVVTEQISNDGTRKWLLRLPSGQAGERAHEVECVYIPETDRGTLCVSSQVGCTLNCSFCHTGTQKLVRNLTAGEIVGQVMVAKDRLGDWPMAVASTQDAGENNRLITNVVMMGMGEPLYNFEAVRDALLIVSDNEGIGLSRRRITLSTSGVVPNIFRTGDEIGVMLAISLHAVRDELRNELVPLNKKYPLKELLQACRDYPGASNARRITFEYVMLKGVNDSLDDAKLLVKLLKGVPAKINLIPFNPWPGSAYQCSDWDQIEKFSEYIFNAGYSSPVRTPRGRDILAACGQLKSETEKLSARERDALRAMAMTD.

E121 functions as the Proton acceptor in the catalytic mechanism. In terms of domain architecture, Radical SAM core spans E127 to L375. C134 and C378 are oxidised to a cystine. [4Fe-4S] cluster-binding residues include C141, C145, and C148. Residues G204–E205, S236, S258–H260, and N335 each bind S-adenosyl-L-methionine. The S-methylcysteine intermediate role is filled by C378.

Belongs to the radical SAM superfamily. RlmN family. [4Fe-4S] cluster is required as a cofactor.

It is found in the cytoplasm. The catalysed reaction is adenosine(2503) in 23S rRNA + 2 reduced [2Fe-2S]-[ferredoxin] + 2 S-adenosyl-L-methionine = 2-methyladenosine(2503) in 23S rRNA + 5'-deoxyadenosine + L-methionine + 2 oxidized [2Fe-2S]-[ferredoxin] + S-adenosyl-L-homocysteine. It catalyses the reaction adenosine(37) in tRNA + 2 reduced [2Fe-2S]-[ferredoxin] + 2 S-adenosyl-L-methionine = 2-methyladenosine(37) in tRNA + 5'-deoxyadenosine + L-methionine + 2 oxidized [2Fe-2S]-[ferredoxin] + S-adenosyl-L-homocysteine. Specifically methylates position 2 of adenine 2503 in 23S rRNA and position 2 of adenine 37 in tRNAs. m2A2503 modification seems to play a crucial role in the proofreading step occurring at the peptidyl transferase center and thus would serve to optimize ribosomal fidelity. In Rhodopseudomonas palustris (strain BisA53), this protein is Dual-specificity RNA methyltransferase RlmN.